The following is a 736-amino-acid chain: MVKFKQTSEVLKIMGNIEQIRNIGITAHVDHGKTTLSDTLLSAAGLISEKIAGQALALDYLDVEQKRQMTVKAANASLYHEYKGKPYLINLIDTPGHVDFQSKTIRALRVIDGAIVVVDAVEGVMTQTEMYLRVALEERVRPVLFINKIDRLIKELRLSPTEIQQRLVQIVRDVNTLIATYADKEFQKAWLLDPMKGQVAFGSARDRWGLTIPLVQQKGIKFSDIVDVYTRGKEAVAELQKTAPLHEAILDMVVKHIPNPREAQRYRIPKIWHGDPNHEIVKYLMEADPNGPLVMLINDIRVDPHAGLVATGRIYSGTLRPGEEVWLVNARVPQRVLQVSLYMGPYRELADEITAGNIAAALGLEKARSGETVVSMKYKDTMTPFEKLKMITESVVTVAIEPKNPQQTTKLIDALYKLHLEDPSLIVKINEETGEYLLSGVGTLHIEIALTLLKDLYGLEVVTSPPVIVYRETIRDRSQVFEGKSPNKHNKFYISVTPLNEETLRLLSEGIIMEDMDARERAKILREQAGWDADEARRIMAIDENLNILIDMTTGVQYLREVKDTIIQGFRLAMREGPLAMEPVRGVKVVLHDAVIHEDPAHRGPAQIFPAVRNAIFAGFLTARPTILEPILKLDIRSPMEYIGNISSVITKKRGKLIEVQQMETTARVIAEIPVSESFDIADMLRNVTAGKAIWGQEFSRWAPVPENMLMDLIAKIRTRKGLKPEPPKPEDFLSP.

Residues 18–261 enclose the tr-type G domain; it reads EQIRNIGITA…MVVKHIPNPR (244 aa). GTP-binding positions include 27-34, 93-97, and 147-150; these read AHVDHGKT, DTPGH, and NKID. Diphthamide is present on H602.

The protein belongs to the TRAFAC class translation factor GTPase superfamily. Classic translation factor GTPase family. EF-G/EF-2 subfamily.

Its subcellular location is the cytoplasm. Its function is as follows. Catalyzes the GTP-dependent ribosomal translocation step during translation elongation. During this step, the ribosome changes from the pre-translocational (PRE) to the post-translocational (POST) state as the newly formed A-site-bound peptidyl-tRNA and P-site-bound deacylated tRNA move to the P and E sites, respectively. Catalyzes the coordinated movement of the two tRNA molecules, the mRNA and conformational changes in the ribosome. This is Elongation factor 2 from Desulfurococcus amylolyticus (strain DSM 18924 / JCM 16383 / VKM B-2413 / 1221n) (Desulfurococcus kamchatkensis).